The sequence spans 111 residues: uncharacterized protein (111 aa).

It belongs to the SUI1 family.

This is an uncharacterized protein from Synechocystis sp. (strain ATCC 27184 / PCC 6803 / Kazusa).